Reading from the N-terminus, the 131-residue chain is MSWQAYVDDHLMCEIEGNHLSAAAIIGHDGVVWAQSATFPQVKPEEITGIMNDFNEPGSLAPTGLYLGGTKYMVIQGEPGAVIRGKKGPGGVTIKKTTMSLIIGIYDEPMTPGQCNMLVERPGDYLLEQGF.

This sequence belongs to the profilin family. As to quaternary structure, occurs in many kinds of cells as a complex with monomeric actin in a 1:1 ratio.

The protein resides in the cytoplasm. It is found in the cytoskeleton. In terms of biological role, binds to actin and affects the structure of the cytoskeleton. At high concentrations, profilin prevents the polymerization of actin, whereas it enhances it at low concentrations. By binding to PIP2, it inhibits the formation of IP3 and DG. The polypeptide is Profilin-1 (Ambrosia artemisiifolia (Common ragweed)).